The chain runs to 229 residues: Prolactin (229 aa).

A signal peptide spans 1 to 30 (MDKKRSSLKGSLLLLLLLVSDLLLCKSVAS). A disulfide bond links cysteine 34 and cysteine 41. Position 56 is a phosphoserine (serine 56). Asparagine 61 carries an N-linked (GlcNAc...) asparagine; partial glycan. Residues serine 64 and serine 120 each carry the phosphoserine modification. 2 disulfides stabilise this stretch: cysteine 88-cysteine 204 and cysteine 221-cysteine 229.

The protein belongs to the somatotropin/prolactin family. In terms of assembly, interacts with PRLR.

Its subcellular location is the secreted. In terms of biological role, prolactin acts primarily on the mammary gland by promoting lactation. In Equus caballus (Horse), this protein is Prolactin (PRL).